Consider the following 291-residue polypeptide: ATP synthase gamma chain (291 aa).

Belongs to the ATPase gamma chain family. As to quaternary structure, F-type ATPases have 2 components, CF(1) - the catalytic core - and CF(0) - the membrane proton channel. CF(1) has five subunits: alpha(3), beta(3), gamma(1), delta(1), epsilon(1). CF(0) has three main subunits: a, b and c.

It localises to the cell inner membrane. Produces ATP from ADP in the presence of a proton gradient across the membrane. The gamma chain is believed to be important in regulating ATPase activity and the flow of protons through the CF(0) complex. The polypeptide is ATP synthase gamma chain (Methylobacillus flagellatus (strain ATCC 51484 / DSM 6875 / VKM B-1610 / KT)).